The primary structure comprises 238 residues: Large ribosomal subunit protein uL1 (238 aa).

Belongs to the universal ribosomal protein uL1 family. As to quaternary structure, part of the 50S ribosomal subunit.

Functionally, binds directly to 23S rRNA. The L1 stalk is quite mobile in the ribosome, and is involved in E site tRNA release. Protein L1 is also a translational repressor protein, it controls the translation of the L11 operon by binding to its mRNA. In Saccharopolyspora erythraea (strain ATCC 11635 / DSM 40517 / JCM 4748 / NBRC 13426 / NCIMB 8594 / NRRL 2338), this protein is Large ribosomal subunit protein uL1.